The following is a 158-amino-acid chain: Anaerobic nitrite reductase AHB2 (158 aa).

In terms of domain architecture, Globin spans 5 to 154; it reads GFTEKQEALV…LALAIKTEMK (150 aa). The Homodimerization signature appears at 38–42; the sequence is EIAPA. 4 residues coordinate heme b: S48, K62, H66, and H101. Positions 108-120 match the Homodimerization motif; the sequence is DPHFEVVKEALLR.

This sequence belongs to the plant globin family. As to quaternary structure, unable to dimerize. Requires heme b as cofactor. In terms of tissue distribution, expressed in rosette leaves but not in roots.

The protein localises to the cytoplasm. It is found in the nucleus. The enzyme catalyses Fe(III)-heme b-[protein] + nitric oxide + H2O = Fe(II)-heme b-[protein] + nitrite + 2 H(+). Phytoglobin that reduces nitrite to nitric oxide (NO) under anoxic conditions (e.g. during flooding or in waterlogged soil). May not function as an oxygen storage or transport protein. Has an unusually high affinity for O(2) through an hexacoordinate heme iron because of a very low dissociation constant. The protein is Anaerobic nitrite reductase AHB2 of Arabidopsis thaliana (Mouse-ear cress).